The chain runs to 210 residues: Large ribosomal subunit protein uL4 (210 aa).

Positions 44–54 (QRQGTASTLTR) are enriched in polar residues. The disordered stretch occupies residues 44-96 (QRQGTASTLTRSEVRGGGRKPYKQKGTGRARQGSIRTPLRPGGGVIFGPKPRS). Over residues 60-71 (GGRKPYKQKGTG) the composition is skewed to basic residues.

Belongs to the universal ribosomal protein uL4 family. As to quaternary structure, part of the 50S ribosomal subunit.

One of the primary rRNA binding proteins, this protein initially binds near the 5'-end of the 23S rRNA. It is important during the early stages of 50S assembly. It makes multiple contacts with different domains of the 23S rRNA in the assembled 50S subunit and ribosome. Functionally, forms part of the polypeptide exit tunnel. The chain is Large ribosomal subunit protein uL4 from Prochlorococcus marinus (strain MIT 9515).